A 95-amino-acid polypeptide reads, in one-letter code: Aspartyl/glutamyl-tRNA(Asn/Gln) amidotransferase subunit C (95 aa).

It belongs to the GatC family. In terms of assembly, heterotrimer of A, B and C subunits.

It carries out the reaction L-glutamyl-tRNA(Gln) + L-glutamine + ATP + H2O = L-glutaminyl-tRNA(Gln) + L-glutamate + ADP + phosphate + H(+). The catalysed reaction is L-aspartyl-tRNA(Asn) + L-glutamine + ATP + H2O = L-asparaginyl-tRNA(Asn) + L-glutamate + ADP + phosphate + 2 H(+). Allows the formation of correctly charged Asn-tRNA(Asn) or Gln-tRNA(Gln) through the transamidation of misacylated Asp-tRNA(Asn) or Glu-tRNA(Gln) in organisms which lack either or both of asparaginyl-tRNA or glutaminyl-tRNA synthetases. The reaction takes place in the presence of glutamine and ATP through an activated phospho-Asp-tRNA(Asn) or phospho-Glu-tRNA(Gln). The protein is Aspartyl/glutamyl-tRNA(Asn/Gln) amidotransferase subunit C of Rhizobium etli (strain CIAT 652).